We begin with the raw amino-acid sequence, 195 residues long: Probable nicotinate-nucleotide adenylyltransferase (195 aa).

The protein belongs to the NadD family.

The enzyme catalyses nicotinate beta-D-ribonucleotide + ATP + H(+) = deamido-NAD(+) + diphosphate. It participates in cofactor biosynthesis; NAD(+) biosynthesis; deamido-NAD(+) from nicotinate D-ribonucleotide: step 1/1. Functionally, catalyzes the reversible adenylation of nicotinate mononucleotide (NaMN) to nicotinic acid adenine dinucleotide (NaAD). The chain is Probable nicotinate-nucleotide adenylyltransferase from Dictyoglomus thermophilum (strain ATCC 35947 / DSM 3960 / H-6-12).